Reading from the N-terminus, the 400-residue chain is LIM/homeobox protein Lhx3 (400 aa).

LIM zinc-binding domains are found at residues cysteine 34–aspartate 84 and cysteine 93–aspartate 147. At serine 74 the chain carries Phosphoserine. The homeobox DNA-binding region spans alanine 160–lysine 219. Disordered regions lie at residues glutamate 215–glycine 280 and threonine 297–phenylalanine 400. Residue tyrosine 230 is modified to Phosphotyrosine. Phosphoserine occurs at positions 237 and 241. Pro residues-rich tracts occupy residues glycine 319–glutamine 334 and serine 352–methionine 361. A compositionally biased stretch (polar residues) spans glycine 368–glycine 380.

In terms of assembly, interacts with POU1F1. At neuronal promoters, interacts with LDB1, in motor neurons LDB1 is displaced by ISL1 and a ternary complex is formed in which ISL1 contacts both LHX3 and LDB1; allosteric structural changes in the DNA binding domain of LHX3, induced by the ISL1-LHX3 interaction, may explain differences in sequence specificity of the different complexes. Interacts with LDB2. May interact with CITED2/MRG1. Mostly expressed in the pituitary anterior and intermediate lobes. It is also expressed in the pineal gland and transiently in the primordia of motor neurons including the spinal cord, pons and medulla oblongata.

The protein localises to the nucleus. Transcription factor. Recognizes and binds to the consensus sequence motif 5'-AATTAATTA-3' in the regulatory elements of target genes, such as glycoprotein hormones alpha chain CGA and visual system homeobox CHX10, positively modulating transcription; transcription can be co-activated by LDB2. Synergistically enhances transcription from the prolactin promoter in cooperation with POU1F1/Pit-1. Required for the establishment of the specialized cells of the pituitary gland and the nervous system. Involved in the development of interneurons and motor neurons in cooperation with LDB1 and ISL1. The sequence is that of LIM/homeobox protein Lhx3 (Lhx3) from Mus musculus (Mouse).